Reading from the N-terminus, the 152-residue chain is Nucleoside diphosphate kinase B (152 aa).

An interaction with AKAP13 region spans residues 1 to 66 (MANLERTFIA…DRPFFPGLVK (66 aa)). ATP contacts are provided by Lys12, Phe60, Arg88, Thr94, Arg105, and Asn115. Catalysis depends on His118, which acts as the Pros-phosphohistidine intermediate.

It belongs to the NDK family. In terms of assembly, hexamer of two different chains: An and B (A6, A5B, A4B2, A3B3, A2B4, AB5, B6). Interacts with CAPN8. Interacts with AKAP13. Interacts with ITGB1BP1 (via C-terminal domain region). Interacts with BCL2L10. The cofactor is Mg(2+).

Its subcellular location is the cytoplasm. It is found in the cell projection. The protein localises to the lamellipodium. It localises to the ruffle. The protein resides in the nucleus. It catalyses the reaction a 2'-deoxyribonucleoside 5'-diphosphate + ATP = a 2'-deoxyribonucleoside 5'-triphosphate + ADP. The enzyme catalyses a ribonucleoside 5'-diphosphate + ATP = a ribonucleoside 5'-triphosphate + ADP. It carries out the reaction ATP + protein L-histidine = ADP + protein N-phospho-L-histidine.. Major role in the synthesis of nucleoside triphosphates other than ATP. The ATP gamma phosphate is transferred to the NDP beta phosphate via a ping-pong mechanism, using a phosphorylated active-site intermediate. Negatively regulates Rho activity by interacting with AKAP13/LBC. Acts as a transcriptional activator of the MYC gene; binds DNA non-specifically. Binds to both single-stranded guanine- and cytosine-rich strands within the nuclease hypersensitive element (NHE) III(1) region of the MYC gene promoter. Does not bind to duplex NHE III(1). Has G-quadruplex (G4) DNA-binding activity, which is independent of its nucleotide-binding and kinase activity. Binds both folded and unfolded G4 with similar low nanomolar affinities. Stabilizes folded G4s regardless of whether they are prefolded or not. Exhibits histidine protein kinase activity. This is Nucleoside diphosphate kinase B (NME2) from Pongo abelii (Sumatran orangutan).